Reading from the N-terminus, the 236-residue chain is uncharacterized protein (236 aa).

The tract at residues 186–236 (HGRGDTRNLNDITGLGHERERDRENTHYEKKPKLDSDSEVDIRSFRQDMDL) is disordered. Over residues 201 to 236 (GHERERDRENTHYEKKPKLDSDSEVDIRSFRQDMDL) the composition is skewed to basic and acidic residues. The residue at position 221 (Ser221) is a Phosphoserine.

This is an uncharacterized protein from Saccharomyces cerevisiae (strain ATCC 204508 / S288c) (Baker's yeast).